The following is a 529-amino-acid chain: DNA-binding protein (529 aa).

Residues 1–17 are compositionally biased toward basic and acidic residues; sequence MASREEEQRETTPERGR. Disordered regions lie at residues 1–107 and 125–166; these read MASR…IVDS and PVLI…AESE. Residues 129 to 139 show a composition bias toward basic residues; the sequence is KHGKGGKRTVR. Residues 155-165 are compositionally biased toward acidic residues; sequence EEEEEPSEAES. The residue at position 195 (tyrosine 195) is a Phosphotyrosine; by host. Residues cysteine 284 and histidine 286 each contribute to the Zn(2+) site. Residues 297-331 are flexible loop; sequence IEMDVTSENGQRALKEQSSKAKIVKNRWGRNVVQI. Residues cysteine 339, cysteine 355, cysteine 396, cysteine 398, cysteine 450, and cysteine 467 each coordinate Zn(2+). Residues 513 to 529 form a C-terminal arm, DBP binding region; sequence VSLPVAHSDARQNPFDF.

The protein belongs to the adenoviridae E2A DNA-binding protein family. In terms of assembly, homomultimerizes on viral ssDNA bound to pTP. Forms a initiation complex with viral polymerase, pTP and hosts NFIA and POU2F1/OCT1. Interacts with host SRCAP.

The protein localises to the host nucleus. Functionally, plays a role in the elongation phase of viral strand displacement replication by unwinding the template in an ATP-independent fashion, employing its capacity to form multimers. Also enhances the rate of initiation. Released from template upon second strand synthesis. Assembles in complex with viral pTP, viral pol, host NFIA and host POU2F1/OCT1 on viral origin of replication. Covers the whole ssDNA genome during synthesis. The complementary strand synthesis induces its relese from DNA template. May inhibit cellular transcription mediated by the interaction between host SRCAP and CBP. This is DNA-binding protein from Human adenovirus C serotype 5 (HAdV-5).